The sequence spans 156 residues: Aspartate carbamoyltransferase regulatory chain (156 aa).

C109, C114, C138, and C141 together coordinate Zn(2+).

It belongs to the PyrI family. As to quaternary structure, contains catalytic and regulatory chains. Requires Zn(2+) as cofactor.

Functionally, involved in allosteric regulation of aspartate carbamoyltransferase. In Baumannia cicadellinicola subsp. Homalodisca coagulata, this protein is Aspartate carbamoyltransferase regulatory chain.